The sequence spans 1140 residues: Kinesin-like protein KIN-14O (1140 aa).

Residues methionine 1–phenylalanine 12 are compositionally biased toward basic and acidic residues. 4 disordered regions span residues methionine 1–aspartate 37, asparagine 50–serine 81, serine 161–lysine 217, and alanine 323–aspartate 347. Residues serine 161–serine 179 are compositionally biased toward low complexity. The span at proline 180–phenylalanine 193 shows a compositional bias: basic and acidic residues. Residues leucine 197–glycine 209 are compositionally biased toward polar residues. A coiled-coil region spans residues serine 327–glutamate 546. The span at threonine 332 to aspartate 347 shows a compositional bias: basic and acidic residues. One can recognise a Kinesin motor domain in the interval asparagine 632–valine 952. Glycine 716–threonine 723 serves as a coordination point for ATP. The span at leucine 1002–serine 1018 shows a compositional bias: polar residues. 2 disordered regions span residues leucine 1002–aspartate 1021 and aspartate 1028–serine 1140. Residues glutamate 1066–lysine 1078 are compositionally biased toward basic and acidic residues. The span at threonine 1099–leucine 1130 shows a compositional bias: polar residues.

It belongs to the TRAFAC class myosin-kinesin ATPase superfamily. Kinesin family. KIN-14 subfamily.

The protein is Kinesin-like protein KIN-14O of Arabidopsis thaliana (Mouse-ear cress).